Here is a 92-residue protein sequence, read N- to C-terminus: Small ribosomal subunit protein uS19 (92 aa).

The tract at residues 72-92 is disordered; sequence GEFSPTRSFRGHAGAKNKGKK. The segment covering 80–92 has biased composition (basic residues); the sequence is FRGHAGAKNKGKK.

This sequence belongs to the universal ribosomal protein uS19 family.

Protein S19 forms a complex with S13 that binds strongly to the 16S ribosomal RNA. The chain is Small ribosomal subunit protein uS19 from Flavobacterium johnsoniae (strain ATCC 17061 / DSM 2064 / JCM 8514 / BCRC 14874 / CCUG 350202 / NBRC 14942 / NCIMB 11054 / UW101) (Cytophaga johnsonae).